Here is a 355-residue protein sequence, read N- to C-terminus: Mannonate dehydratase (355 aa).

The protein belongs to the mannonate dehydratase family. It depends on Fe(2+) as a cofactor. Mn(2+) serves as cofactor.

It catalyses the reaction D-mannonate = 2-dehydro-3-deoxy-D-gluconate + H2O. Its pathway is carbohydrate metabolism; pentose and glucuronate interconversion. Its function is as follows. Catalyzes the dehydration of D-mannonate. The protein is Mannonate dehydratase of Brachyspira hyodysenteriae (strain ATCC 49526 / WA1).